The chain runs to 113 residues: Cell cycle protein GpsB (113 aa).

The stretch at 32–70 (LDSVIKDYENFGKEIERMKNENDRLTDKVDELNKQVSAG) forms a coiled coil.

This sequence belongs to the GpsB family. Forms polymers through the coiled coil domains. Interacts with PBP1, MreC and EzrA.

It is found in the cytoplasm. In terms of biological role, divisome component that associates with the complex late in its assembly, after the Z-ring is formed, and is dependent on DivIC and PBP2B for its recruitment to the divisome. Together with EzrA, is a key component of the system that regulates PBP1 localization during cell cycle progression. Its main role could be the removal of PBP1 from the cell pole after pole maturation is completed. Also contributes to the recruitment of PBP1 to the division complex. Not essential for septum formation. The chain is Cell cycle protein GpsB from Pediococcus pentosaceus (strain ATCC 25745 / CCUG 21536 / LMG 10740 / 183-1w).